Reading from the N-terminus, the 130-residue chain is uncharacterized protein (130 aa).

A helical membrane pass occupies residues 8 to 28; it reads PFILMIIVLGLFLVSIGGYYY.

The protein localises to the membrane. This is an uncharacterized protein from Bacillus anthracis.